We begin with the raw amino-acid sequence, 146 residues long: Large ribosomal subunit protein uL15 (146 aa).

Residues 1–13 (MKLNELKPNEGSR) show a composition bias toward basic and acidic residues. A disordered region spans residues 1 to 54 (MKLNELKPNEGSRRNRKRVGRGTSSGYGKTAGRGQKGQLARTGGKTRLGFEGGQ). The span at 23–35 (TSSGYGKTAGRGQ) shows a compositional bias: gly residues.

This sequence belongs to the universal ribosomal protein uL15 family. Part of the 50S ribosomal subunit.

Binds to the 23S rRNA. The polypeptide is Large ribosomal subunit protein uL15 (Lactobacillus johnsonii (strain CNCM I-12250 / La1 / NCC 533)).